The sequence spans 391 residues: Autotransporter heptosyltransferase Aah (391 aa).

T101, L102, and G103 together coordinate ADP-D-glycero-beta-D-manno-heptose. D104 acts as the Proton acceptor in catalysis. 7 residues coordinate ADP-D-glycero-beta-D-manno-heptose: Q218, T220, K224, R251, L275, G296, and E320. Residues C333, C336, C352, and C364 each coordinate Fe(3+).

The protein belongs to the glycosyltransferase 9 family. As to quaternary structure, homododecamer composed of 6 homodimers forming a ring. Fe(3+) serves as cofactor.

The protein localises to the cytoplasm. It carries out the reaction ADP-D-glycero-beta-D-manno-heptose + L-seryl-[protein] = O-(D-glycero-alpha-D-manno-heptosyl)-L-seryl-[protein] + ADP + H(+). The enzyme catalyses ADP-L-glycero-beta-D-manno-heptose + L-seryl-[protein] = O-(L-glycero-alpha-D-manno-heptosyl)-L-seryl-[protein] + ADP + H(+). Functionally, glycosylates autotransporter AIDA-I. Catalyzes the addition of both L, D-heptose and D, D-heptose sugars. Probably by glycosylating AIDA-I, involved in bacteria adhesion to host mammalian cells. The protein is Autotransporter heptosyltransferase Aah of Escherichia coli.